The sequence spans 479 residues: MDPPTQSHNSVRTVPGSNHSHTDLIISSFLSFPDSSPISISNSFDRVLDRALASASADESVQDRLVDRTLELASLLLDSTRRCFRKRASVHNSNSWSLPPELTIKVFSMLDTKSMMQAAVCCTMFNKCAMDRLCYSHIDLTTSARYADKGVVSTMINRAGKELRSLKLGRVVRTAGSDSAAPLLSGSCLSPLAYNHGFLGSRLRSLRLYNLRPIKYRSLCDALSVCPNITDLRIVGLYNLTEELFNSLTKKCRLIEHLFLETYGYPRTLESKAGSSLVEFVTNCPNLTSLTLIRFGLTDDWARNLAESCRKLKYLNLSRSPTIKGRFLRELGLSCKENLLKTLILRSCPKLQEKEVLEFCNSLLTGNFKSIRQIDVSSNSGLASSDRGKRCNKPNFPLERLKEERSDVTFVADFPSTSSGKRYGVCDEEELRLIEMMEAEDDEVDEEDDSDDDTDDVSDEDESENDDDMGMGFDVDYLL.

The region spanning 92 to 138 (NSNSWSLPPELTIKVFSMLDTKSMMQAAVCCTMFNKCAMDRLCYSHI) is the F-box domain. The segment at 435–479 (EMMEAEDDEVDEEDDSDDDTDDVSDEDESENDDDMGMGFDVDYLL) is disordered. Acidic residues predominate over residues 437-469 (MEAEDDEVDEEDDSDDDTDDVSDEDESENDDDM).

In terms of assembly, part of a SCF (ASK-cullin-F-box) protein ligase complex. Interacts with SPK1B/ASK2.

The protein resides in the nucleus. Its pathway is protein modification; protein ubiquitination. Functionally, component of SCF(ASK-cullin-F-box) E3 ubiquitin ligase complexes, which may mediate the ubiquitination and subsequent proteasomal degradation of target proteins. The protein is F-box protein SKIP17 (SKIP17) of Arabidopsis thaliana (Mouse-ear cress).